We begin with the raw amino-acid sequence, 428 residues long: Kynureninase (428 aa).

Pyridoxal 5'-phosphate is bound by residues Thr104, Thr105, 132–135 (FPSD), Asp213, His216, and Tyr238. Lys239 bears the N6-(pyridoxal phosphate)lysine mark. Residues Trp267 and Thr295 each coordinate pyridoxal 5'-phosphate.

Belongs to the kynureninase family. In terms of assembly, homodimer. Pyridoxal 5'-phosphate serves as cofactor.

The catalysed reaction is L-kynurenine + H2O = anthranilate + L-alanine + H(+). It catalyses the reaction 3-hydroxy-L-kynurenine + H2O = 3-hydroxyanthranilate + L-alanine + H(+). The protein operates within amino-acid degradation; L-kynurenine degradation; L-alanine and anthranilate from L-kynurenine: step 1/1. It participates in cofactor biosynthesis; NAD(+) biosynthesis; quinolinate from L-kynurenine: step 2/3. Catalyzes the cleavage of L-kynurenine (L-Kyn) and L-3-hydroxykynurenine (L-3OHKyn) into anthranilic acid (AA) and 3-hydroxyanthranilic acid (3-OHAA), respectively. The chain is Kynureninase from Bacillus thuringiensis subsp. konkukian (strain 97-27).